Reading from the N-terminus, the 524-residue chain is Cytochrome P450 1A1 (524 aa).

The mitochondrial targeting signal stretch occupies residues 33–44 (WQPRLPKGLKSP). S71 carries an O-linked (GlcNAc) serine glycan. Residue F228 participates in substrate binding. Heme is bound at residue C461.

Belongs to the cytochrome P450 family. Interacts with cytosolic chaperones HSP70 and HSP90; this interaction is required for initial targeting to mitochondria. Interacts (via mitochondrial targeting signal) with TOMM40 (via N-terminus); this interaction is required for translocation across the mitochondrial outer membrane. It depends on heme as a cofactor.

The protein resides in the endoplasmic reticulum membrane. It is found in the mitochondrion inner membrane. It localises to the microsome membrane. Its subcellular location is the cytoplasm. It carries out the reaction an organic molecule + reduced [NADPH--hemoprotein reductase] + O2 = an alcohol + oxidized [NADPH--hemoprotein reductase] + H2O + H(+). The enzyme catalyses estrone + reduced [NADPH--hemoprotein reductase] + O2 = 2-hydroxyestrone + oxidized [NADPH--hemoprotein reductase] + H2O + H(+). The catalysed reaction is estrone + reduced [NADPH--hemoprotein reductase] + O2 = 4-hydroxyestrone + oxidized [NADPH--hemoprotein reductase] + H2O + H(+). It catalyses the reaction estrone + reduced [NADPH--hemoprotein reductase] + O2 = 6alpha-hydroxyestrone + oxidized [NADPH--hemoprotein reductase] + H2O + H(+). It carries out the reaction estrone + reduced [NADPH--hemoprotein reductase] + O2 = 15alpha-hydroxyestrone + oxidized [NADPH--hemoprotein reductase] + H2O + H(+). The enzyme catalyses estrone + reduced [NADPH--hemoprotein reductase] + O2 = 16alpha-hydroxyestrone + oxidized [NADPH--hemoprotein reductase] + H2O + H(+). The catalysed reaction is 17beta-estradiol + reduced [NADPH--hemoprotein reductase] + O2 = 2-hydroxy-17beta-estradiol + oxidized [NADPH--hemoprotein reductase] + H2O + H(+). It catalyses the reaction 17beta-estradiol + reduced [NADPH--hemoprotein reductase] + O2 = 4-hydroxy-17beta-estradiol + oxidized [NADPH--hemoprotein reductase] + H2O + H(+). It carries out the reaction 17beta-estradiol + reduced [NADPH--hemoprotein reductase] + O2 = 6alpha-hydroxy-17beta-estradiol + oxidized [NADPH--hemoprotein reductase] + H2O + H(+). The enzyme catalyses 17beta-estradiol + reduced [NADPH--hemoprotein reductase] + O2 = 7alpha-hydroxy-17beta-estradiol + oxidized [NADPH--hemoprotein reductase] + H2O + H(+). The catalysed reaction is 17beta-estradiol + reduced [NADPH--hemoprotein reductase] + O2 = 15alpha-hydroxy-17beta-estradiol + oxidized [NADPH--hemoprotein reductase] + H2O + H(+). It catalyses the reaction (5Z,8Z,11Z)-eicosatrienoate + reduced [NADPH--hemoprotein reductase] + O2 = 19-hydroxy-(5Z,8Z,11Z)-eicosatrienoate + oxidized [NADPH--hemoprotein reductase] + H2O + H(+). It carries out the reaction (5Z,8Z,11Z,14Z)-eicosatetraenoate + reduced [NADPH--hemoprotein reductase] + O2 = 16-hydroxy-(5Z,8Z,11Z,14Z)-eicosatetraenoate + oxidized [NADPH--hemoprotein reductase] + H2O + H(+). The enzyme catalyses (5Z,8Z,11Z,14Z)-eicosatetraenoate + reduced [NADPH--hemoprotein reductase] + O2 = 17-hydroxy-(5Z,8Z,11Z,14Z)-eicosatetraenoate + oxidized [NADPH--hemoprotein reductase] + H2O + H(+). The catalysed reaction is (5Z,8Z,11Z,14Z)-eicosatetraenoate + reduced [NADPH--hemoprotein reductase] + O2 = 18-hydroxy-(5Z,8Z,11Z,14Z)-eicosatetraenoate + oxidized [NADPH--hemoprotein reductase] + H2O + H(+). It catalyses the reaction (5Z,8Z,11Z,14Z)-eicosatetraenoate + reduced [NADPH--hemoprotein reductase] + O2 = 19-hydroxy-(5Z,8Z,11Z,14Z)-eicosatetraenoate + oxidized [NADPH--hemoprotein reductase] + H2O + H(+). It carries out the reaction (5Z,8Z,11Z,14Z,17Z)-eicosapentaenoate + reduced [NADPH--hemoprotein reductase] + O2 = 19-hydroxy-(5Z,8Z,11Z,14Z,17Z)-eicosapentaenoate + oxidized [NADPH--hemoprotein reductase] + H2O + H(+). The enzyme catalyses (5Z,8Z,11Z,14Z)-eicosatetraenoate + reduced [NADPH--hemoprotein reductase] + O2 = (8R,9S)-epoxy-(5Z,11Z,14Z)-eicosatrienoate + oxidized [NADPH--hemoprotein reductase] + H2O + H(+). The catalysed reaction is (5Z,8Z,11Z,14Z)-eicosatetraenoate + reduced [NADPH--hemoprotein reductase] + O2 = (11R,12S)-epoxy-(5Z,8Z,14Z)-eicosatrienoate + oxidized [NADPH--hemoprotein reductase] + H2O + H(+). It catalyses the reaction (5Z,8Z,11Z,14Z)-eicosatetraenoate + reduced [NADPH--hemoprotein reductase] + O2 = (14S,15R)-epoxy-(5Z,8Z,11Z)-eicosatrienoate + oxidized [NADPH--hemoprotein reductase] + H2O + H(+). It carries out the reaction (5Z,8Z,11Z,14Z)-eicosatetraenoate + reduced [NADPH--hemoprotein reductase] + O2 = (14R,15S)-epoxy-(5Z,8Z,11Z)-eicosatrienoate + oxidized [NADPH--hemoprotein reductase] + H2O + H(+). The enzyme catalyses (5Z,8Z,11Z,14Z,17Z)-eicosapentaenoate + reduced [NADPH--hemoprotein reductase] + O2 = (17R,18S)-epoxy-(5Z,8Z,11Z,14Z)-eicosatetraenoate + oxidized [NADPH--hemoprotein reductase] + H2O + H(+). The catalysed reaction is (4Z,7Z,10Z,13Z,16Z,19Z)-docosahexaenoate + reduced [NADPH--hemoprotein reductase] + O2 = (19S,20R)-epoxy-(4Z,7Z,10Z,13Z,16Z)-docosapentaenoate + oxidized [NADPH--hemoprotein reductase] + H2O + H(+). It catalyses the reaction (4Z,7Z,10Z,13Z,16Z,19Z)-docosahexaenoate + reduced [NADPH--hemoprotein reductase] + O2 = (19R,20S)-epoxy-(4Z,7Z,10Z,13Z,16Z)-docosapentaenoate + oxidized [NADPH--hemoprotein reductase] + H2O + H(+). It carries out the reaction all-trans-retinol + reduced [NADPH--hemoprotein reductase] + O2 = all-trans-retinal + oxidized [NADPH--hemoprotein reductase] + 2 H2O + H(+). The enzyme catalyses all-trans-retinal + reduced [NADPH--hemoprotein reductase] + O2 = all-trans-retinoate + oxidized [NADPH--hemoprotein reductase] + H2O + 2 H(+). The catalysed reaction is (13S)-hydroperoxy-(9Z,11E)-octadecadienoate = 13-oxo-(9Z,11E)-octadecadienoate + H2O. It catalyses the reaction (12S)-hydroperoxy-(5Z,8Z,10E,14Z)-eicosatetraenoate = 12-oxo-(5Z,8Z,10E,14Z)-eicosatetraenoate + H2O. It carries out the reaction (15S)-hydroperoxy-(5Z,8Z,11Z,13E)-eicosatetraenoate = 15-oxo-(5Z,8Z,11Z,13E)-eicosatetraenoate + H2O. The enzyme catalyses (5S)-hydroperoxy-(6E,8Z,11Z,14Z)-eicosatetraenoate = 5-oxo-(6E,8Z,11Z,14Z)-eicosatetraenoate + H2O. The protein operates within steroid hormone biosynthesis. It functions in the pathway lipid metabolism; fatty acid metabolism. Its pathway is cofactor metabolism; retinol metabolism. A cytochrome P450 monooxygenase involved in the metabolism of various endogenous substrates, including fatty acids, steroid hormones and vitamins. Mechanistically, uses molecular oxygen inserting one oxygen atom into a substrate, and reducing the second into a water molecule, with two electrons provided by NADPH via cytochrome P450 reductase (CPR; NADPH-ferrihemoprotein reductase). Catalyzes the hydroxylation of carbon-hydrogen bonds. Exhibits high catalytic activity for the formation of hydroxyestrogens from estrone (E1) and 17beta-estradiol (E2), namely 2-hydroxy E1 and E2, as well as D-ring hydroxylated E1 and E2 at the C15alpha and C16alpha positions. Displays different regioselectivities for polyunsaturated fatty acids (PUFA) hydroxylation. Catalyzes the epoxidation of double bonds of certain PUFA. Converts arachidonic acid toward epoxyeicosatrienoic acid (EET) regioisomers, 8,9-, 11,12-, and 14,15-EET, that function as lipid mediators in the vascular system. Displays an absolute stereoselectivity in the epoxidation of eicosapentaenoic acid (EPA) producing the 17(R),18(S) enantiomer. May play an important role in all-trans retinoic acid biosynthesis in extrahepatic tissues. Catalyzes two successive oxidative transformation of all-trans retinol to all-trans retinal and then to the active form all-trans retinoic acid. May also participate in eicosanoids metabolism by converting hydroperoxide species into oxo metabolites (lipoxygenase-like reaction, NADPH-independent). In Canis lupus familiaris (Dog), this protein is Cytochrome P450 1A1 (CYP1A1).